The primary structure comprises 97 residues: Spermatogenesis-associated protein 45 (97 aa).

Belongs to the SPATA45 family.

The sequence is that of Spermatogenesis-associated protein 45 (Spata45) from Mus musculus (Mouse).